The chain runs to 126 residues: Nucleoside diphosphate kinase B (126 aa).

The ATP site is built by lysine 6, phenylalanine 37, threonine 68, arginine 79, and asparagine 89. Histidine 92 acts as the Pros-phosphohistidine intermediate in catalysis.

The protein belongs to the NDK family. Mg(2+) serves as cofactor.

It localises to the cytoplasm. Its subcellular location is the nucleus. The protein localises to the cell projection. The protein resides in the lamellipodium. It is found in the ruffle. It carries out the reaction a 2'-deoxyribonucleoside 5'-diphosphate + ATP = a 2'-deoxyribonucleoside 5'-triphosphate + ADP. The enzyme catalyses a ribonucleoside 5'-diphosphate + ATP = a ribonucleoside 5'-triphosphate + ADP. In terms of biological role, major role in the synthesis of nucleoside triphosphates other than ATP. This Merluccius capensis (Shallow-water Cape hake) protein is Nucleoside diphosphate kinase B (nme2).